The chain runs to 765 residues: Probable dipeptidyl peptidase 4 (765 aa).

A signal peptide spans 1–14; sequence MKWSILLLVGCAAA. 8 N-linked (GlcNAc...) asparagine glycosylation sites follow: Asn-35, Asn-78, Asn-101, Asn-110, Asn-169, Asn-218, Asn-465, and Asn-490. Ser-613 functions as the Charge relay system in the catalytic mechanism. N-linked (GlcNAc...) asparagine glycosylation is present at Asn-665. Residues Asp-690 and His-725 each act as charge relay system in the active site.

This sequence belongs to the peptidase S9B family.

It is found in the secreted. It carries out the reaction Release of an N-terminal dipeptide, Xaa-Yaa-|-Zaa-, from a polypeptide, preferentially when Yaa is Pro, provided Zaa is neither Pro nor hydroxyproline.. Extracellular dipeptidyl-peptidase which removes N-terminal dipeptides sequentially from polypeptides having unsubstituted N-termini provided that the penultimate residue is proline. Contributes to pathogenicity. The sequence is that of Probable dipeptidyl peptidase 4 (dpp4) from Aspergillus fumigatus (strain ATCC MYA-4609 / CBS 101355 / FGSC A1100 / Af293) (Neosartorya fumigata).